The chain runs to 430 residues: Gamma-glutamyl phosphate reductase (430 aa).

The protein belongs to the gamma-glutamyl phosphate reductase family.

The protein resides in the cytoplasm. The enzyme catalyses L-glutamate 5-semialdehyde + phosphate + NADP(+) = L-glutamyl 5-phosphate + NADPH + H(+). It participates in amino-acid biosynthesis; L-proline biosynthesis; L-glutamate 5-semialdehyde from L-glutamate: step 2/2. Its function is as follows. Catalyzes the NADPH-dependent reduction of L-glutamate 5-phosphate into L-glutamate 5-semialdehyde and phosphate. The product spontaneously undergoes cyclization to form 1-pyrroline-5-carboxylate. The chain is Gamma-glutamyl phosphate reductase from Polaromonas naphthalenivorans (strain CJ2).